Reading from the N-terminus, the 394-residue chain is Outer membrane protein S1 (394 aa).

Positions 1–21 are cleaved as a signal peptide; sequence MNRKVLALLVPALLVAGAANA. The tract at residues 222 to 242 is disordered; that stretch reads SSSDRSDNQVARGYGDGMNER.

Belongs to the Gram-negative porin family. Homotrimer.

It localises to the cell outer membrane. Functionally, forms pores that allow passive diffusion of small molecules across the outer membrane. The sequence is that of Outer membrane protein S1 (ompS1) from Salmonella typhi.